The primary structure comprises 430 residues: Histidinol dehydrogenase (430 aa).

NAD(+)-binding residues include tyrosine 129, glutamine 190, and asparagine 213. Residues serine 236, glutamine 258, and histidine 261 each contribute to the substrate site. Positions 258 and 261 each coordinate Zn(2+). Active-site proton acceptor residues include glutamate 326 and histidine 327. Substrate is bound by residues histidine 327, aspartate 360, glutamate 414, and histidine 419. Aspartate 360 is a binding site for Zn(2+). Histidine 419 serves as a coordination point for Zn(2+).

This sequence belongs to the histidinol dehydrogenase family. Requires Zn(2+) as cofactor.

The enzyme catalyses L-histidinol + 2 NAD(+) + H2O = L-histidine + 2 NADH + 3 H(+). The protein operates within amino-acid biosynthesis; L-histidine biosynthesis; L-histidine from 5-phospho-alpha-D-ribose 1-diphosphate: step 9/9. Functionally, catalyzes the sequential NAD-dependent oxidations of L-histidinol to L-histidinaldehyde and then to L-histidine. This chain is Histidinol dehydrogenase, found in Caldanaerobacter subterraneus subsp. tengcongensis (strain DSM 15242 / JCM 11007 / NBRC 100824 / MB4) (Thermoanaerobacter tengcongensis).